A 548-amino-acid polypeptide reads, in one-letter code: Protein GPR108 (548 aa).

A signal peptide spans 1–32; the sequence is MAVSERRGLGRGSPAEWGPWLLLLLLLGGSSG. Asn-57, Asn-63, and Asn-109 each carry an N-linked (GlcNAc...) asparagine glycan. Positions 165 to 190 are disordered; the sequence is DHAGTTAAPDKAKSKPTGLQGDRQGV. Asn-205 and Asn-209 each carry an N-linked (GlcNAc...) asparagine glycan. Helical transmembrane passes span 268–288, 297–317, 341–361, 372–392, 406–426, 454–474, and 478–498; these read LYMVMSACFLGAGIFWVSILC, IHWLMAALTFTKSVSLLFHSI, LLKGALLFITIALIGSGWAFV, IFGIVIPLQVLANVAYIVMES, ILFLVDLICCGTILFPVVWSI, VMVICYIYFTRIIAILLRAVV, and WQWLYQLLVEGSTLAFFVLTG. An N-linked (GlcNAc...) asparagine glycan is attached at Asn-539.

The protein belongs to the LU7TM family.

The protein localises to the golgi apparatus. The protein resides in the cis-Golgi network membrane. It localises to the trans-Golgi network membrane. Its subcellular location is the golgi apparatus membrane. Its function is as follows. May play a role in intracellular immune modulation by activating NF-kappaB response and attenuating Toll-like-receptor response. This is Protein GPR108 (GPR108) from Bos taurus (Bovine).